A 187-amino-acid polypeptide reads, in one-letter code: Peptide deformylase 2 (187 aa).

Cysteine 107 and histidine 149 together coordinate Fe cation. The active site involves glutamate 150. Histidine 153 provides a ligand contact to Fe cation.

Belongs to the polypeptide deformylase family. Requires Fe(2+) as cofactor.

The catalysed reaction is N-terminal N-formyl-L-methionyl-[peptide] + H2O = N-terminal L-methionyl-[peptide] + formate. Functionally, removes the formyl group from the N-terminal Met of newly synthesized proteins. Requires at least a dipeptide for an efficient rate of reaction. N-terminal L-methionine is a prerequisite for activity but the enzyme has broad specificity at other positions. In Gloeobacter violaceus (strain ATCC 29082 / PCC 7421), this protein is Peptide deformylase 2.